A 322-amino-acid polypeptide reads, in one-letter code: Cysteine protease YopT (322 aa).

Active-site residues include C139, H258, and D274.

This sequence belongs to the peptidase C58 family. In terms of assembly, interacts with human ARHA.

It localises to the secreted. Its function is as follows. Cysteine protease, which is translocated into infected cells and plays a central role in pathogenesis by cleaving the C-terminus end of the human small GTPase RhoA/ARHA, a regulator of cytoskeleton. Once cleaved, ARHA loses its lipid modification, and is released from the cell membrane, leading to the subsequent disruption of actin cytoskeleton of the host cell. This Yersinia pestis protein is Cysteine protease YopT (yopT).